The following is a 188-amino-acid chain: Protein SYC1 (188 aa).

As to quaternary structure, component of the cleavage and polyadenylation factor (CPF) complex, which is composed of at least PTI1, SYC1, SSU72, GLC7, MPE1, REF2, PFS2, PTA1, YSH1/BRR5, SWD2, CFT2/YDH1, YTH1, CFT1/YHH1, FIP1 and PAP1. Component of the APT complex, which is a subcomplex of CPF, and is composed of PTI1, SYC1, SSU72, GLC7, REF2, PTA1 and SWD2.

The protein localises to the nucleus. Its function is as follows. Component of the cleavage and polyadenylation factor (CPF) complex, which plays a key role in polyadenylation-dependent pre-mRNA 3'-end formation and cooperates with cleavage factors including the CFIA complex and NAB4/CFIB. Component of the APT complex, which may be involved in polyadenylation-independent transcript 3'-end formation, including snoRNAs and snRNAs. The polypeptide is Protein SYC1 (SYC1) (Saccharomyces cerevisiae (strain ATCC 204508 / S288c) (Baker's yeast)).